The chain runs to 805 residues: MQFPESWLRSLVNPSIGTDELAHRLTMAGLEVEETEPAAPPFTGVVVAHIVDIAPHPDADKLRVCQVDDGSGALLQIVCGAPNAAAGLTVPLARVGAELPGGMKIGVAKMRGVQSSGMLCSARELGLSQDHAGLLELPAALRPGTDIRAALDLDDTLFTLKLTPNRADCLSILGVAREVAALTGTPLTAPAAEPVPVTIDHRLPVAIQAPDLCGRFAGRVIQGVNARAATPEWMKTRLERAGQRSVSALVDISNYVMLEVGRPSHVFDLDKIGGDLSVRWAREGETLELLNGQAVALDPKVGVVVAGEQVESLAGIMGGEATSVTLDTRNIYLEAAFWWPGAIAGRARRYKFSSEASHRFERGVDYASIPEHIELITRLILDICGGQAGPVDDQCVNLPVREPVRMRLARCHRVLGVAVERAEVAQIFTRLGLPFQEQGDDFVVTPPSYRFDIEIEEDLIEEVARVYGFERIPDVPPVARAKMHAQPEARRGAHAVRRLVAARDYQEVVNYSFVEAAWERDYAGNDNPVRLVNPIASHLSVMRSSLIAGLVAIVRHNANRKQSRVRLFELGRVFHRDPQLADGPLEVAGVRQPLMLAGVAWGGAVEEQWGVPHRQVDFYDVKQDVEALFGARADALRFVADRYPALHPGRSARIELDGQPIGWLGELHPQWTQQADLHHAPVVFELDFEALAERRLPAVRELSRQPAVVRDLALWVDAKLPAQAMLDTVAAAIARDPQLSVVQDAQVFDVWREKPVAGQTVTEKSLAFRFWLQDTEVTLDEARVADCIARIKDALVAAHNARQRA.

The 110-residue stretch at 39–148 (APPFTGVVVA…AALRPGTDIR (110 aa)) folds into the tRNA-binding domain. In terms of domain architecture, B5 spans 399 to 474 (PVREPVRMRL…RVYGFERIPD (76 aa)). Residues D452, D458, E461, and E462 each coordinate Mg(2+). Positions 703 to 804 (SRQPAVVRDL…LVAAHNARQR (102 aa)) constitute an FDX-ACB domain.

It belongs to the phenylalanyl-tRNA synthetase beta subunit family. Type 1 subfamily. As to quaternary structure, tetramer of two alpha and two beta subunits. It depends on Mg(2+) as a cofactor.

The protein localises to the cytoplasm. It carries out the reaction tRNA(Phe) + L-phenylalanine + ATP = L-phenylalanyl-tRNA(Phe) + AMP + diphosphate + H(+). This Bordetella bronchiseptica (strain ATCC BAA-588 / NCTC 13252 / RB50) (Alcaligenes bronchisepticus) protein is Phenylalanine--tRNA ligase beta subunit.